The following is a 590-amino-acid chain: Arginine--tRNA ligase (590 aa).

The 'HIGH' region signature appears at Ala-130–His-140.

Belongs to the class-I aminoacyl-tRNA synthetase family. In terms of assembly, monomer.

Its subcellular location is the cytoplasm. The catalysed reaction is tRNA(Arg) + L-arginine + ATP = L-arginyl-tRNA(Arg) + AMP + diphosphate. In Methylobacterium nodulans (strain LMG 21967 / CNCM I-2342 / ORS 2060), this protein is Arginine--tRNA ligase.